The primary structure comprises 377 residues: Heat stress transcription factor B-2b (377 aa).

Residues 1 to 56 (MPGEQTGETPTVAGVGGGGAGCSAGNSGGSSGCGAGGGGGGSGGGGGGGGDSQRSI) are disordered. Residues 14-51 (GVGGGGAGCSAGNSGGSSGCGAGGGGGGSGGGGGGGGD) are compositionally biased toward gly residues. Residues 57 to 151 (PTPFLTKTYQ…LLRDIQRRKI (95 aa)) mediate DNA binding. A hydrophobic repeat HR-A/B region spans residues 220–265 (TTSCTTAPELVEENERLRKDNERLRKEMTKLKGLYANIYTLMANFT). Positions 323–327 (KRARR) match the Nuclear localization signal motif. The disordered stretch occupies residues 326 to 377 (RREEELGAAEEEDDDRREAAAQEGEQSSDVKAEPMEENNSGNHNGSWLELGK). Residues 331–340 (LGAAEEEDDD) are compositionally biased toward acidic residues.

It belongs to the HSF family. Class B subfamily. As to quaternary structure, homotrimer. Exhibits temperature-dependent phosphorylation.

The protein localises to the nucleus. Functionally, transcriptional regulator that specifically binds DNA sequence 5'-AGAAnnTTCT-3' known as heat shock promoter elements (HSE). The sequence is that of Heat stress transcription factor B-2b (HSFB2B) from Arabidopsis thaliana (Mouse-ear cress).